Consider the following 496-residue polypeptide: uncharacterized protein (496 aa).

Transmembrane regions (helical) follow at residues 33–53 (FLKG…LIFA), 89–109 (LNFL…YTLI), 127–147 (PWFV…FTFF), 154–174 (VFNL…YEIF), 193–213 (LIIA…TPLV), 247–267 (IILI…NTNF), 285–305 (LWFI…VFAY), 320–340 (LWVY…YMVF), 355–375 (LLNL…VTLF), 382–402 (SLIN…IYIF), 411–431 (LLVL…IVGF), and 455–475 (VQIM…YLTI).

It is found in the cell membrane. This is an uncharacterized protein from Ureaplasma parvum serovar 3 (strain ATCC 700970).